The chain runs to 314 residues: Olfactory receptor 5P62 (314 aa).

At 1–28 (MAFIYNGSQTTVTEFILLGLTDDPVLKV) the chain is on the extracellular side. The N-linked (GlcNAc...) asparagine glycan is linked to Asn-6. The helical transmembrane segment at 29–49 (ILFCIILCIYLVTVFGNLSTI) threads the bilayer. Over 50 to 57 (LLIGVSSK) the chain is Cytoplasmic. The helical transmembrane segment at 58–78 (LHHPMYFFLSHLASVDMGLSS) threads the bilayer. At 79-102 (SVTPNMLVNFLTEKNTISYLGCGI) the chain is on the extracellular side. The cysteines at positions 100 and 192 are disulfide-linked. Residues 103-123 (QLSSAAFFGAVEFFLLAAMAY) form a helical membrane-spanning segment. Residues 124–136 (DRLVAICNPLLYS) are Cytoplasmic-facing. Residues 137-157 (TKMSSQVCIQLVAGSYVGGFL) form a helical membrane-spanning segment. Over 158–199 (NASFVTHFFFSFLFCGPNRVNHFFCDLSPMMELSCSDVSISE) the chain is Extracellular. A helical transmembrane segment spans residues 200–220 (IVISFSAGSFTMTTLFVIVIP). Over 221–240 (YFYIFITILKIRSTEGRQKA) the chain is Cytoplasmic. The helical transmembrane segment at 241–261 (FSTCTSHLTAVTLYYGTIIFI) threads the bilayer. At 262–274 (YVMPKSTYSRDQN) the chain is on the extracellular side. A helical membrane pass occupies residues 275–295 (KVVSLFYMLVIPVLNPLIYSL). Residues 296-314 (RNNEIKDALKRQFYRKTLL) are Cytoplasmic-facing.

Belongs to the G-protein coupled receptor 1 family.

It localises to the cell membrane. In terms of biological role, potential odorant receptor. This is Olfactory receptor 5P62 from Mus musculus (Mouse).